The primary structure comprises 424 residues: Adenylosuccinate synthetase (424 aa).

Residues 12-18 and 40-42 contribute to the GTP site; these read GDEGKGK and GHT. The Proton acceptor role is filled by Asp-13. Mg(2+)-binding residues include Asp-13 and Gly-40. IMP is bound by residues 13-16, 38-41, Thr-130, Arg-144, Asn-220, Thr-235, and Arg-299; these read DEGK and NAGH. The active-site Proton donor is the His-41. Substrate is bound at residue 295 to 301; that stretch reads VTTGRRR. Residues Arg-301, 327 to 329, and 412 to 414 contribute to the GTP site; these read KLD and GTG.

This sequence belongs to the adenylosuccinate synthetase family. As to quaternary structure, homodimer. Mg(2+) serves as cofactor.

The protein localises to the cytoplasm. The catalysed reaction is IMP + L-aspartate + GTP = N(6)-(1,2-dicarboxyethyl)-AMP + GDP + phosphate + 2 H(+). It participates in purine metabolism; AMP biosynthesis via de novo pathway; AMP from IMP: step 1/2. Plays an important role in the de novo pathway and in the salvage pathway of purine nucleotide biosynthesis. Catalyzes the first committed step in the biosynthesis of AMP from IMP. This is Adenylosuccinate synthetase from Neosartorya fischeri (strain ATCC 1020 / DSM 3700 / CBS 544.65 / FGSC A1164 / JCM 1740 / NRRL 181 / WB 181) (Aspergillus fischerianus).